The following is a 301-amino-acid chain: UDP-N-acetylenolpyruvoylglucosamine reductase 1 (301 aa).

One can recognise an FAD-binding PCMH-type domain in the interval 29 to 196 (KIGGPADILI…LEAEFQLQIG (168 aa)). The active site involves Arg-174. The active-site Proton donor is the Ser-225. Glu-295 is a catalytic residue.

This sequence belongs to the MurB family. The cofactor is FAD.

The protein resides in the cytoplasm. The catalysed reaction is UDP-N-acetyl-alpha-D-muramate + NADP(+) = UDP-N-acetyl-3-O-(1-carboxyvinyl)-alpha-D-glucosamine + NADPH + H(+). The protein operates within cell wall biogenesis; peptidoglycan biosynthesis. Cell wall formation. The sequence is that of UDP-N-acetylenolpyruvoylglucosamine reductase 1 from Bacillus cereus (strain ZK / E33L).